A 424-amino-acid polypeptide reads, in one-letter code: UDP-galactose transporter homolog 1 (424 aa).

A run of 6 helical transmembrane segments spans residues 57 to 77, 107 to 127, 144 to 164, 173 to 193, 197 to 217, and 234 to 254; these read LWQL…WGVL, IVLN…YLYF, IIFP…FGYA, TFIL…LTIF, YPLY…TFTL, and TSGS…LDGL. Asn256 carries an N-linked (GlcNAc...) asparagine glycan. The next 3 membrane-spanning stretches (helical) occupy residues 293–313, 337–357, and 380–400; these read LLIM…PVPI, SVLG…YTLS, and VFWF…LVFG.

This sequence belongs to the nucleotide-sugar transporter family. SLC35B subfamily.

Its subcellular location is the endoplasmic reticulum membrane. Functionally, may be involved in specific transport of UDP-Gal from the cytosol to the Golgi lumen. Involved in the maintenance of optimal conditions for the folding of secretory pathway proteins in the endoplasmic reticulum. This chain is UDP-galactose transporter homolog 1 (hut1), found in Emericella nidulans (strain FGSC A4 / ATCC 38163 / CBS 112.46 / NRRL 194 / M139) (Aspergillus nidulans).